The primary structure comprises 453 residues: F-box protein At4g27050 (453 aa).

An F-box domain is found at 3–51 (TDLISNLPDDVLGKILSLVPTKLAAATSVLSKRWRNLLPLVDSLDFDET).

Part of a SCF (ASK-cullin-F-box) protein ligase complex.

It functions in the pathway protein modification; protein ubiquitination. Functionally, component of SCF(ASK-cullin-F-box) E3 ubiquitin ligase complexes, which may mediate the ubiquitination and subsequent proteasomal degradation of target proteins. This Arabidopsis thaliana (Mouse-ear cress) protein is F-box protein At4g27050.